Consider the following 467-residue polypeptide: Glycosyl hydrolase family 109 protein 1 (467 aa).

The signal sequence occupies residues 1–22 (MKKLLLNTLIGLALLTCQTSFA). Residues 66-67 (MR), D88, 137-140 (WKHH), 157-158 (EV), and N186 contribute to the NAD(+) site. Substrate-binding positions include Y215, R231, 243 to 246 (YATH), and Y321. Y243 contributes to the NAD(+) binding site.

It belongs to the Gfo/Idh/MocA family. Glycosyl hydrolase 109 subfamily. Requires NAD(+) as cofactor.

Its function is as follows. Glycosidase. The sequence is that of Glycosyl hydrolase family 109 protein 1 from Bacteroides thetaiotaomicron (strain ATCC 29148 / DSM 2079 / JCM 5827 / CCUG 10774 / NCTC 10582 / VPI-5482 / E50).